The following is a 217-amino-acid chain: Imidazole glycerol phosphate synthase subunit HisH (217 aa).

The 213-residue stretch at 5 to 217 (RVGIINYGVG…LRLLANFLTL (213 aa)) folds into the Glutamine amidotransferase type-1 domain. The active-site Nucleophile is Cys93. Active-site residues include His199 and Glu201.

As to quaternary structure, heterodimer of HisH and HisF.

The protein localises to the cytoplasm. The enzyme catalyses 5-[(5-phospho-1-deoxy-D-ribulos-1-ylimino)methylamino]-1-(5-phospho-beta-D-ribosyl)imidazole-4-carboxamide + L-glutamine = D-erythro-1-(imidazol-4-yl)glycerol 3-phosphate + 5-amino-1-(5-phospho-beta-D-ribosyl)imidazole-4-carboxamide + L-glutamate + H(+). It catalyses the reaction L-glutamine + H2O = L-glutamate + NH4(+). It participates in amino-acid biosynthesis; L-histidine biosynthesis; L-histidine from 5-phospho-alpha-D-ribose 1-diphosphate: step 5/9. IGPS catalyzes the conversion of PRFAR and glutamine to IGP, AICAR and glutamate. The HisH subunit catalyzes the hydrolysis of glutamine to glutamate and ammonia as part of the synthesis of IGP and AICAR. The resulting ammonia molecule is channeled to the active site of HisF. The chain is Imidazole glycerol phosphate synthase subunit HisH from Helicobacter hepaticus (strain ATCC 51449 / 3B1).